Here is a 484-residue protein sequence, read N- to C-terminus: Phosphomevalonate kinase erg8 (484 aa).

Positions 54–77 (REAASGSAHGRSDTPQAEGNVHGD) are disordered. 184–194 (AHKTGLGSSAA) provides a ligand contact to ATP.

Belongs to the GHMP kinase family. Mevalonate kinase subfamily.

It catalyses the reaction (R)-5-phosphomevalonate + ATP = (R)-5-diphosphomevalonate + ADP. Its pathway is isoprenoid biosynthesis; isopentenyl diphosphate biosynthesis via mevalonate pathway; isopentenyl diphosphate from (R)-mevalonate: step 2/3. Its function is as follows. Phosphomevalonate kinase; part of the second module of ergosterol biosynthesis pathway that includes the middle steps of the pathway. Erg8 converts 5-phosphomevalonate to 5-diphosphomevalonate. The second module is carried out in the vacuole and involves the formation of farnesyl diphosphate, which is also an important intermediate in the biosynthesis of ubiquinone, dolichol, heme and prenylated proteins. Activity by the mevalonate kinase erg12 (AFUA_4G07780) first converts mevalonate into 5-phosphomevalonate. 5-phosphomevalonate is then further converted to 5-diphosphomevalonate by the phosphomevalonate kinase erg8 (AFUA_5G10680). The diphosphomevalonate decarboxylase mvd1 (AFUA_4G07130) then produces isopentenyl diphosphate. The isopentenyl-diphosphate delta-isomerase idi1 (AFUA_6G11160) then catalyzes the 1,3-allylic rearrangement of the homoallylic substrate isopentenyl (IPP) to its highly electrophilic allylic isomer, dimethylallyl diphosphate (DMAPP). Finally the farnesyl diphosphate synthase erg20 (AFUA_5G02450) catalyzes the sequential condensation of isopentenyl pyrophosphate with dimethylallyl pyrophosphate, and then with the resultant geranylpyrophosphate to the ultimate product farnesyl pyrophosphate. The protein is Phosphomevalonate kinase erg8 of Aspergillus fumigatus (strain ATCC MYA-4609 / CBS 101355 / FGSC A1100 / Af293) (Neosartorya fumigata).